The primary structure comprises 592 residues: Proteasome-associated ATPase (592 aa).

The segment covering 1 to 11 has biased composition (acidic residues); sequence MTGYDSSEEAE. Positions 1-24 are disordered; it reads MTGYDSSEEAERDSSPADGYRQTP. Residues 25–99 adopt a coiled-coil conformation; that stretch reads AQLSAQIRVL…LKEEVDRLAQ (75 aa). 281 to 286 serves as a coordination point for ATP; it reads GCGKTL. Residues 591–592 form a docks into pockets in the proteasome alpha-ring region; it reads YL.

It belongs to the AAA ATPase family. As to quaternary structure, homohexamer. Assembles into a hexameric ring structure that caps the 20S proteasome core. Strongly interacts with the prokaryotic ubiquitin-like protein Pup through a hydrophobic interface; the interacting region of ARC lies in its N-terminal coiled-coil domain. There is one Pup binding site per ARC hexamer ring. Upon ATP-binding, the C-terminus of ARC interacts with the alpha-rings of the proteasome core, possibly by binding to the intersubunit pockets.

The protein operates within protein degradation; proteasomal Pup-dependent pathway. Functionally, ATPase which is responsible for recognizing, binding, unfolding and translocation of pupylated proteins into the bacterial 20S proteasome core particle. May be essential for opening the gate of the 20S proteasome via an interaction with its C-terminus, thereby allowing substrate entry and access to the site of proteolysis. Thus, the C-termini of the proteasomal ATPase may function like a 'key in a lock' to induce gate opening and therefore regulate proteolysis. In Nakamurella multipartita (strain ATCC 700099 / DSM 44233 / CIP 104796 / JCM 9543 / NBRC 105858 / Y-104) (Microsphaera multipartita), this protein is Proteasome-associated ATPase.